Reading from the N-terminus, the 60-residue chain is Mastoparan-VB1 (60 aa).

The signal sequence occupies residues 1–23; it reads MKNTILLLFTAFIFLSGFFGMSA. A propeptide spanning residues 24–45 is cleaved from the precursor; it reads EALADPKADPLAGPFPDADPDP. AXPX repeat units follow at residues 27-30, 31-34, 35-38, and 40-43; these read ADPK, ADPL, AGPF, and DADP. L59 bears the Leucine amide mark.

In terms of tissue distribution, expressed by the venom gland.

It localises to the secreted. The protein localises to the target cell membrane. Functionally, antimicrobial peptide. Shows activity against both Gram-positive (S.aureus MIC=1.9-3.75 ug/ml) and -negative (E.coli MIC=15-60 ug/ml) bacteria, as well against fungi (C.albicans MIC=15 ug/ml). Also promotes moderate mast cell degranulation. Does not show hemolytic activity on rabbit and human erythrocytes. Its mast cell degranulation activity may be related to the activation of G-protein coupled receptors in mast cells as well as interaction with other proteins located in cell endosomal membranes in the mast cells. The polypeptide is Mastoparan-VB1 (Vespa bicolor (Black shield wasp)).